A 296-amino-acid polypeptide reads, in one-letter code: MRIFLSAIYWNHSKFLWNSENWPIKVPWYGLCFSLGILFASLLGIYLAKSSYNSEDEKNFSKEQLSGALENFALYSLLFIIPGSRIAYILFYGGDFYFKHPREILKVWNGGLASHGGMLGLILWALIFSWRYRKKISVLTFLFLCDLCASVFGCAAFMIRIGNFMNQEIVGKPTSLPWGIIFSSPAQGVLGVPVHPVQLYEGMSYLLLSIILFFLSYKRYFRLGSGWVTSLGLVGISLIRFFAEFFKSHQGKVIGPNSPLTMGQILSFPLFVFGLCLGIACFLKNKKKRSPTSSVK.

4 helical membrane passes run 28–48, 72–92, 110–130, and 139–159; these read WYGL…IYLA, FALY…ILFY, GGLA…IFSW, and LTFL…AFMI. R160 serves as a coordination point for a 1,2-diacyl-sn-glycero-3-phospho-(1'-sn-glycerol). 3 consecutive transmembrane segments (helical) span residues 197 to 217, 226 to 246, and 263 to 283; these read VQLY…FLSY, GWVT…AEFF, and GQIL…ACFL.

This sequence belongs to the Lgt family.

Its subcellular location is the cell inner membrane. The catalysed reaction is L-cysteinyl-[prolipoprotein] + a 1,2-diacyl-sn-glycero-3-phospho-(1'-sn-glycerol) = an S-1,2-diacyl-sn-glyceryl-L-cysteinyl-[prolipoprotein] + sn-glycerol 1-phosphate + H(+). It functions in the pathway protein modification; lipoprotein biosynthesis (diacylglyceryl transfer). Functionally, catalyzes the transfer of the diacylglyceryl group from phosphatidylglycerol to the sulfhydryl group of the N-terminal cysteine of a prolipoprotein, the first step in the formation of mature lipoproteins. The polypeptide is Phosphatidylglycerol--prolipoprotein diacylglyceryl transferase (Chlamydia caviae (strain ATCC VR-813 / DSM 19441 / 03DC25 / GPIC) (Chlamydophila caviae)).